We begin with the raw amino-acid sequence, 146 residues long: Putative pre-16S rRNA nuclease (146 aa).

This sequence belongs to the YqgF nuclease family.

It is found in the cytoplasm. In terms of biological role, could be a nuclease involved in processing of the 5'-end of pre-16S rRNA. This is Putative pre-16S rRNA nuclease from Pseudomonas syringae pv. syringae (strain B728a).